The chain runs to 471 residues: tRNA(Ile)-lysidine synthase (471 aa).

27-32 (SGGPDS) serves as a coordination point for ATP.

The protein belongs to the tRNA(Ile)-lysidine synthase family.

Its subcellular location is the cytoplasm. The catalysed reaction is cytidine(34) in tRNA(Ile2) + L-lysine + ATP = lysidine(34) in tRNA(Ile2) + AMP + diphosphate + H(+). In terms of biological role, ligates lysine onto the cytidine present at position 34 of the AUA codon-specific tRNA(Ile) that contains the anticodon CAU, in an ATP-dependent manner. Cytidine is converted to lysidine, thus changing the amino acid specificity of the tRNA from methionine to isoleucine. The chain is tRNA(Ile)-lysidine synthase from Dehalococcoides mccartyi (strain CBDB1).